The following is a 402-amino-acid chain: Subtilisin-like protease 9 (402 aa).

An N-terminal signal peptide occupies residues 1–18; that stretch reads MGFFRILFSLSLCALSLA. The propeptide occupies 19 to 120; it reads IPSKLIGLEN…VEVDRVVKLD (102 aa). In terms of domain architecture, Inhibitor I9 spans 36-119; sequence SYIVVMKSAV…YVEVDRVVKL (84 aa). The region spanning 130–402 is the Peptidase S8 domain; sequence SWGLGRISHR…KKLLYNGSGA (273 aa). Active-site charge relay system residues include Asp162 and His193. Asn254 is a glycosylation site (N-linked (GlcNAc...) asparagine). Ser348 acts as the Charge relay system in catalysis. Residues Asn390 and Asn398 are each glycosylated (N-linked (GlcNAc...) asparagine).

It belongs to the peptidase S8 family.

It is found in the secreted. Its function is as follows. Secreted subtilisin-like serine protease with keratinolytic activity that contributes to pathogenicity. The polypeptide is Subtilisin-like protease 9 (SUB9) (Arthroderma gypseum (strain ATCC MYA-4604 / CBS 118893) (Microsporum gypseum)).